A 1070-amino-acid polypeptide reads, in one-letter code: uncharacterized protein (1070 aa).

One can recognise a UBA domain in the interval 477–523; sequence LIDTNQLLLRQLQQIVKLGIFNEKKIKEELKANKFNEQVALQILESE.

This is an uncharacterized protein from Sulfolobus islandicus rod-shaped virus 1 (SIRV-1).